We begin with the raw amino-acid sequence, 341 residues long: Probable 2' cyclic ADP-D-ribose synthase TcpO (341 aa).

A TIR domain is found at 204 to 336 (KEYDIFVSHS…EIIHEILERI (133 aa)). NAD(+)-binding positions include 213-214 (SS) and Lys243. Residue Glu279 is part of the active site.

The enzyme catalyses NAD(+) + H2O = ADP-D-ribose + nicotinamide + H(+). It catalyses the reaction NAD(+) = 2'cADPR + nicotinamide + H(+). In terms of biological role, NAD(+) hydrolase (NADase) that catalyzes cleavage of NAD(+) into ADP-D-ribose (ADPR) and nicotinamide. In addition to ADPR, also generates a cyclization variant of cyclic ADPR (cADPR), termed v-cADPR (probably 2'cADPR). In Methanobrevibacter olleyae, this protein is Probable 2' cyclic ADP-D-ribose synthase TcpO.